The following is a 265-amino-acid chain: Indole-3-glycerol phosphate synthase (265 aa).

This sequence belongs to the TrpC family.

The enzyme catalyses 1-(2-carboxyphenylamino)-1-deoxy-D-ribulose 5-phosphate + H(+) = (1S,2R)-1-C-(indol-3-yl)glycerol 3-phosphate + CO2 + H2O. Its pathway is amino-acid biosynthesis; L-tryptophan biosynthesis; L-tryptophan from chorismate: step 4/5. The chain is Indole-3-glycerol phosphate synthase from Chromobacterium violaceum (strain ATCC 12472 / DSM 30191 / JCM 1249 / CCUG 213 / NBRC 12614 / NCIMB 9131 / NCTC 9757 / MK).